The sequence spans 141 residues: MDRPKPQTVRELADTLCIPLVDILLPCRFCNRFLAYIELVAFDLKGLQLIWTEEDFVFACCSSCAYATAQYEFSKFYEQSVSGRELEEIEHKPIGEIPIRCKFCLKKLDLLEKLDTCYRHQQFHKVRRNWKGLCRHCGSIG.

2 zinc fingers span residues 27–64 (CRFC…CSSC) and 101–137 (CKFC…CRHC).

It belongs to the papillomaviridae E6 protein family. In terms of assembly, forms homodimers. Interacts with ubiquitin-protein ligase UBE3A/E6-AP; this interaction stimulates UBE3A ubiquitin activity. Interacts with host BAK1.

It localises to the host cytoplasm. The protein resides in the host nucleus. Its function is as follows. Plays a major role in the induction and maintenance of cellular transformation. E6 associates with host UBE3A/E6-AP ubiquitin-protein ligase and modulates its activity. Protects host keratinocytes from apoptosis by mediating the degradation of host BAK1. May also inhibit host immune response. The sequence is that of Protein E6 from Human papillomavirus 17.